A 134-amino-acid chain; its full sequence is Ribosome-binding factor A (134 aa).

Belongs to the RbfA family. Monomer. Binds 30S ribosomal subunits, but not 50S ribosomal subunits or 70S ribosomes.

The protein resides in the cytoplasm. Functionally, one of several proteins that assist in the late maturation steps of the functional core of the 30S ribosomal subunit. Associates with free 30S ribosomal subunits (but not with 30S subunits that are part of 70S ribosomes or polysomes). Required for efficient processing of 16S rRNA. May interact with the 5'-terminal helix region of 16S rRNA. This Parasynechococcus marenigrum (strain WH8102) protein is Ribosome-binding factor A.